Consider the following 93-residue polypeptide: Large ribosomal subunit protein uL23 (93 aa).

It belongs to the universal ribosomal protein uL23 family. As to quaternary structure, part of the 50S ribosomal subunit. Contacts protein L29, and trigger factor when it is bound to the ribosome.

In terms of biological role, one of the early assembly proteins it binds 23S rRNA. One of the proteins that surrounds the polypeptide exit tunnel on the outside of the ribosome. Forms the main docking site for trigger factor binding to the ribosome. In Nautilia profundicola (strain ATCC BAA-1463 / DSM 18972 / AmH), this protein is Large ribosomal subunit protein uL23.